The chain runs to 416 residues: MNTYGWDIVYGCSKRVVNKHLKEYITKNNIQFLYSNIDKKQEIKMVFDNWEIINGGSSNFLRIKTPIKEGYFKVRNTTVDLSGINPVLEIKLDFFNDISNPNIKELKFNFGSESNDDIKIIVSDLNGNLQEEDEFYFNKLLINAFIQNEKQISYIFASLNVTSDIEWMNPKQFKFVYYSPTDNSDGYLFILSVVTNRDISKLSANVDGNILGNNSEVGLLISEKLFLQNMVLSRLSSNMGSNINKNNFEVISTSDTTGRIVNNSTLNWYGLKVAALYYYPKINNFSMQLFEGNKLKISLRGLVRLTGLEAVYSDFEIQSINKFVYNSTNKKAYFEVDKNPTSSYKYHLFPGDLISLAVLSSVTHWSIKSIEGALGFELINNFVDLINNTIKWNNLKISQVTNVTLNVGFCIQGNAN.

It belongs to the TULIP P47 family. As to quaternary structure, part of a crude toxin extract that includes BoNTA2/NTNH, P47, OrfX2 and OrfX3; OrfX1 was not detected.

In terms of biological role, part of a botulinum neurotoxin type A2 (BoNT) locus; may be part of a progenitor toxin complex required to protect BoNT during its passage through the host gastrointestinal tract. This chain is Protein P47, found in Clostridium botulinum (strain Kyoto / Type A2).